The chain runs to 156 residues: Small ribosomal subunit protein uS7 (156 aa).

It belongs to the universal ribosomal protein uS7 family. Part of the 30S ribosomal subunit. Contacts proteins S9 and S11.

Its function is as follows. One of the primary rRNA binding proteins, it binds directly to 16S rRNA where it nucleates assembly of the head domain of the 30S subunit. Is located at the subunit interface close to the decoding center, probably blocks exit of the E-site tRNA. This Syntrophomonas wolfei subsp. wolfei (strain DSM 2245B / Goettingen) protein is Small ribosomal subunit protein uS7.